A 193-amino-acid polypeptide reads, in one-letter code: Interleukin-18 (193 aa).

A propeptide spanning residues 1 to 36 (MAANLIEDNCINLVKMKFVNNTLYFKAESDEGLESD) is cleaved from the precursor.

This sequence belongs to the IL-1 family. In terms of assembly, forms a ternary complex with ligand-binding receptor subunit IL18R1 and signaling receptor subunit IL18RAP at the plasma membrane. Mature IL18 first binds to IL18R1 forming a low affinity binary complex, which then interacts with IL18RAP to form a high affinity ternary complex that signals inside the cell. Interacts with cargo receptor TMED10; the interaction mediates the translocation from the cytoplasm into the ERGIC (endoplasmic reticulum-Golgi intermediate compartment) and thereby secretion. Post-translationally, the pro-IL-18 precursor is processed by CASP1, CASP4 or CASP5 to yield its mature, active form. The pro-IL-18 precursor features autoinhibitory interactions between the propeptide and the post-cleavage-site region, preventing recognition by the IL18R1 receptor. Processing by CASP1, CASP4 or CASP5 induces conformational changes to generate critical receptor-binding sites. The mature form is then secreted and released in the extracellular milieu by passing through the gasdermin-D (GSDMD) pore. In contrast, cleavage by CASP3 inactivates IL18.

Its subcellular location is the cytoplasm. The protein resides in the cytosol. It is found in the secreted. In terms of biological role, pro-inflammatory cytokine primarily involved in epithelial barrier repair, polarized T-helper 1 (Th1) cell and natural killer (NK) cell immune responses. Upon binding to IL18R1 and IL18RAP, forms a signaling ternary complex which activates NF-kappa-B, triggering synthesis of inflammatory mediators. Synergizes with IL12/interleukin-12 to induce IFNG synthesis from T-helper 1 (Th1) cells and natural killer (NK) cells. Involved in transduction of inflammation downstream of pyroptosis: its mature form is specifically released in the extracellular milieu by passing through the gasdermin-D (GSDMD) pore. This chain is Interleukin-18 (IL18), found in Canis lupus familiaris (Dog).